Consider the following 566-residue polypeptide: Probable F-box protein At5g39490 (566 aa).

An F-box domain is found at 8–54; it reads ACLLLMLPEDIFVVISRFLSPSDICNLILCGKSLRALVDSEKTWLVQ. Residues 318–338 are disordered; sequence LRKSSSSKNTTPSQSEIRHSN. Positions 320–332 are enriched in low complexity; sequence KSSSSKNTTPSQS.

The protein is Probable F-box protein At5g39490 of Arabidopsis thaliana (Mouse-ear cress).